The primary structure comprises 253 residues: Maleate isomerase (253 aa).

Substrate is bound by residues N14, 80 to 82, Y137, and N167; that span reads CLV. The active-site Nucleophile is the C80. C80 carries the post-translational modification S-(2-succinyl)cysteine. C198 (proton donor) is an active-site residue. Residue 199–200 coordinates substrate; sequence VQ.

The protein belongs to the maleate isomerase family. Homodimer.

The catalysed reaction is maleate = fumarate. In terms of biological role, catalyzes cis-trans isomerization of the C2-C3 double bond in maleate to yield fumarate. The polypeptide is Maleate isomerase (Alcaligenes faecalis).